The following is a 360-amino-acid chain: Tryptophan--tRNA ligase, mitochondrial (360 aa).

The N-terminal 18 residues, 1–18, are a transit peptide targeting the mitochondrion; the sequence is MALFSVRKARECWRFIRA. Residues Q42 and 48–51 each bind ATP; that span reads HLGN. D167 serves as a coordination point for L-tryptophan. Residues 179–181, V217, and 226–230 contribute to the ATP site; these read GED and KMSKS.

This sequence belongs to the class-I aminoacyl-tRNA synthetase family.

Its subcellular location is the mitochondrion matrix. The protein localises to the mitochondrion. It catalyses the reaction tRNA(Trp) + L-tryptophan + ATP = L-tryptophyl-tRNA(Trp) + AMP + diphosphate + H(+). Its function is as follows. Catalyzes the attachment of tryptophan to tRNA(Trp) in a two-step reaction: tryptophan is first activated by ATP to form Trp-AMP and then transferred to the acceptor end of tRNA(Trp). This is Tryptophan--tRNA ligase, mitochondrial (Wars2) from Mus musculus (Mouse).